The following is a 234-amino-acid chain: Triosephosphate isomerase (234 aa).

8–10 (NFK) provides a ligand contact to substrate. His-90 serves as the catalytic Electrophile. The Proton acceptor role is filled by Glu-159. Substrate is bound by residues Gly-165 and Ser-197.

Belongs to the triosephosphate isomerase family. Homodimer.

It is found in the cytoplasm. It carries out the reaction D-glyceraldehyde 3-phosphate = dihydroxyacetone phosphate. It functions in the pathway carbohydrate biosynthesis; gluconeogenesis. It participates in carbohydrate degradation; glycolysis; D-glyceraldehyde 3-phosphate from glycerone phosphate: step 1/1. Involved in the gluconeogenesis. Catalyzes stereospecifically the conversion of dihydroxyacetone phosphate (DHAP) to D-glyceraldehyde-3-phosphate (G3P). In Helicobacter pylori (strain J99 / ATCC 700824) (Campylobacter pylori J99), this protein is Triosephosphate isomerase.